A 403-amino-acid chain; its full sequence is Ribose-phosphate pyrophosphokinase 1, chloroplastic (403 aa).

Residues 1–49 constitute a chloroplast transit peptide; the sequence is MASLGLSFPPAAKTPTYLASSSSTFFSNSSLSVRTSQFRSRNSVFACVK. Residues D217, H219, D228, and D232 each coordinate Mg(2+). The interval 303-318 is binding of phosphoribosylpyrophosphate; it reads GKVAIMVDDMIDTAGT.

Belongs to the ribose-phosphate pyrophosphokinase family. Requires Mg(2+) as cofactor.

It is found in the plastid. It localises to the chloroplast. The catalysed reaction is D-ribose 5-phosphate + ATP = 5-phospho-alpha-D-ribose 1-diphosphate + AMP + H(+). The protein is Ribose-phosphate pyrophosphokinase 1, chloroplastic (PRS1) of Arabidopsis thaliana (Mouse-ear cress).